The chain runs to 122 residues: Large ribosomal subunit protein uL14c (122 aa).

This sequence belongs to the universal ribosomal protein uL14 family. In terms of assembly, part of the 50S ribosomal subunit.

It localises to the plastid. The protein localises to the chloroplast. In terms of biological role, binds to 23S rRNA. The protein is Large ribosomal subunit protein uL14c of Chloranthus spicatus (Chulantree).